A 708-amino-acid polypeptide reads, in one-letter code: ATP-dependent DNA helicase Hel308 (708 aa).

Residues Gln-28 and 46-53 (TATASGKS) contribute to the ATP site. In terms of domain architecture, Helicase ATP-binding spans 33-198 (RAGIFDGRSV…WLGARLVESS (166 aa)). The short motif at 143-146 (DEIH) is the DEAH box element. The 199-residue stretch at 231 to 429 (EVALAVDAVA…EPNLRAHVLG (199 aa)) folds into the Helicase C-terminal domain.

The protein belongs to the helicase family. Hel308 subfamily. As to quaternary structure, monomer.

It carries out the reaction Couples ATP hydrolysis with the unwinding of duplex DNA by translocating in the 3'-5' direction.. The catalysed reaction is ATP + H2O = ADP + phosphate + H(+). DNA-dependent ATPase and 3'-5' DNA helicase that may be involved in repair of stalled replication forks. This chain is ATP-dependent DNA helicase Hel308, found in Pyrobaculum calidifontis (strain DSM 21063 / JCM 11548 / VA1).